A 393-amino-acid chain; its full sequence is Acetyl-CoA acetyltransferase (393 aa).

Catalysis depends on C88, which acts as the Acyl-thioester intermediate. Active-site proton acceptor residues include H349 and C379.

Belongs to the thiolase-like superfamily. Thiolase family.

Its subcellular location is the cytoplasm. The enzyme catalyses 2 acetyl-CoA = acetoacetyl-CoA + CoA. It participates in metabolic intermediate biosynthesis; (R)-mevalonate biosynthesis; (R)-mevalonate from acetyl-CoA: step 1/3. The sequence is that of Acetyl-CoA acetyltransferase (atoB) from Pseudomonas aeruginosa (strain ATCC 15692 / DSM 22644 / CIP 104116 / JCM 14847 / LMG 12228 / 1C / PRS 101 / PAO1).